The primary structure comprises 248 residues: 2,3-bisphosphoglycerate-dependent phosphoglycerate mutase (248 aa).

Substrate contacts are provided by residues 10 to 17 (RHGQSEWN), 23 to 24 (TG), arginine 62, 89 to 92 (ERHY), lysine 100, 116 to 117 (RR), and 183 to 184 (GN). Histidine 11 acts as the Tele-phosphohistidine intermediate in catalysis. Glutamate 89 (proton donor/acceptor) is an active-site residue.

Belongs to the phosphoglycerate mutase family. BPG-dependent PGAM subfamily.

It carries out the reaction (2R)-2-phosphoglycerate = (2R)-3-phosphoglycerate. Its pathway is carbohydrate degradation; glycolysis; pyruvate from D-glyceraldehyde 3-phosphate: step 3/5. In terms of biological role, catalyzes the interconversion of 2-phosphoglycerate and 3-phosphoglycerate. The chain is 2,3-bisphosphoglycerate-dependent phosphoglycerate mutase from Corynebacterium diphtheriae (strain ATCC 700971 / NCTC 13129 / Biotype gravis).